Reading from the N-terminus, the 78-residue chain is Large ribosomal subunit protein bL28 (78 aa).

Belongs to the bacterial ribosomal protein bL28 family.

This chain is Large ribosomal subunit protein bL28, found in Francisella philomiragia subsp. philomiragia (strain ATCC 25017 / CCUG 19701 / FSC 153 / O#319-036).